We begin with the raw amino-acid sequence, 155 residues long: Large ribosomal subunit protein uL22c (155 aa).

Belongs to the universal ribosomal protein uL22 family. In terms of assembly, part of the 50S ribosomal subunit.

It is found in the plastid. It localises to the chloroplast. Its function is as follows. This protein binds specifically to 23S rRNA. Functionally, the globular domain of the protein is located near the polypeptide exit tunnel on the outside of the subunit, while an extended beta-hairpin is found that lines the wall of the exit tunnel in the center of the 70S ribosome. The chain is Large ribosomal subunit protein uL22c (rpl22) from Solanum bulbocastanum (Wild potato).